We begin with the raw amino-acid sequence, 232 residues long: 7-cyano-7-deazaguanine synthase 1 (232 aa).

ATP is bound at residue 7 to 17 (CSGGLDSVSLA). Residues cysteine 185, cysteine 193, cysteine 196, and cysteine 199 each contribute to the Zn(2+) site.

Belongs to the QueC family. Requires Zn(2+) as cofactor.

It carries out the reaction 7-carboxy-7-deazaguanine + NH4(+) + ATP = 7-cyano-7-deazaguanine + ADP + phosphate + H2O + H(+). It participates in purine metabolism; 7-cyano-7-deazaguanine biosynthesis. Its function is as follows. Catalyzes the ATP-dependent conversion of 7-carboxy-7-deazaguanine (CDG) to 7-cyano-7-deazaguanine (preQ(0)). The chain is 7-cyano-7-deazaguanine synthase 1 from Mesorhizobium japonicum (strain LMG 29417 / CECT 9101 / MAFF 303099) (Mesorhizobium loti (strain MAFF 303099)).